The following is a 115-amino-acid chain: NAD(P)H-quinone oxidoreductase subunit M (115 aa).

Belongs to the complex I NdhM subunit family. As to quaternary structure, NDH-1 can be composed of about 15 different subunits; different subcomplexes with different compositions have been identified which probably have different functions.

It localises to the cellular thylakoid membrane. It carries out the reaction a plastoquinone + NADH + (n+1) H(+)(in) = a plastoquinol + NAD(+) + n H(+)(out). The enzyme catalyses a plastoquinone + NADPH + (n+1) H(+)(in) = a plastoquinol + NADP(+) + n H(+)(out). In terms of biological role, NDH-1 shuttles electrons from an unknown electron donor, via FMN and iron-sulfur (Fe-S) centers, to quinones in the respiratory and/or the photosynthetic chain. The immediate electron acceptor for the enzyme in this species is believed to be plastoquinone. Couples the redox reaction to proton translocation, and thus conserves the redox energy in a proton gradient. Cyanobacterial NDH-1 also plays a role in inorganic carbon-concentration. The protein is NAD(P)H-quinone oxidoreductase subunit M of Prochlorococcus marinus (strain SARG / CCMP1375 / SS120).